We begin with the raw amino-acid sequence, 429 residues long: MSGIVEQTAVPSRVATVSLHTSPLDQPGTGDAGGMNVYVVEVARRMAERGVAVDVFTRATRADLPPVVELAPGVNVRHVPAGPYGRLDKNTLAEHLCPFIFGMLRAEAQNEPDHYDLVHGHYWLSGQAGVVAARRWGVPLVQSMHTMARVKNASLADGDEPEPEARLRGEDQLVRQADRLIANTDDEARQLREHYGARDGQISVIPPGVDLEVFSPGSRRDALARIGLPAGTELLLFVGRVQRLKAPDVLIRAAAALLERDPSLRSRLVVGVVGGLSGGGMREPGLLTDLARSLGVADVVRIEPPQTRERLADYYRAAAVTVVPSYSESFGLVAVESQACGTPVLAARVGGLTTAVADGVSGVLVRGHNPDDYAAELHRMIAEPAWRAKLAMAAPEHAATLGWSRTVDELLDVYRACTAPRALPLAACR.

1D-myo-inositol 3-phosphate is bound at residue H20. UDP-N-acetyl-alpha-D-glucosamine is bound by residues 26-27 (QP) and G34. Residues 31–36 (DAGGMN), K89, Y122, T146, and R166 contribute to the 1D-myo-inositol 3-phosphate site. 3 residues coordinate UDP-N-acetyl-alpha-D-glucosamine: R240, K245, and Q306. Residues Y315, R316, and A318 each coordinate Mg(2+). UDP-N-acetyl-alpha-D-glucosamine contacts are provided by E328 and E336. Residue T342 participates in Mg(2+) binding.

This sequence belongs to the glycosyltransferase group 1 family. MshA subfamily. As to quaternary structure, homodimer.

The catalysed reaction is 1D-myo-inositol 3-phosphate + UDP-N-acetyl-alpha-D-glucosamine = 1D-myo-inositol 2-acetamido-2-deoxy-alpha-D-glucopyranoside 3-phosphate + UDP + H(+). In terms of biological role, catalyzes the transfer of a N-acetyl-glucosamine moiety to 1D-myo-inositol 3-phosphate to produce 1D-myo-inositol 2-acetamido-2-deoxy-glucopyranoside 3-phosphate in the mycothiol biosynthesis pathway. The sequence is that of D-inositol 3-phosphate glycosyltransferase from Nocardiopsis dassonvillei (strain ATCC 23218 / DSM 43111 / CIP 107115 / JCM 7437 / KCTC 9190 / NBRC 14626 / NCTC 10488 / NRRL B-5397 / IMRU 509) (Actinomadura dassonvillei).